The primary structure comprises 252 residues: Imidazole glycerol phosphate synthase subunit HisF (252 aa).

Catalysis depends on residues D11 and D130.

Belongs to the HisA/HisF family. In terms of assembly, heterodimer of HisH and HisF.

It is found in the cytoplasm. The catalysed reaction is 5-[(5-phospho-1-deoxy-D-ribulos-1-ylimino)methylamino]-1-(5-phospho-beta-D-ribosyl)imidazole-4-carboxamide + L-glutamine = D-erythro-1-(imidazol-4-yl)glycerol 3-phosphate + 5-amino-1-(5-phospho-beta-D-ribosyl)imidazole-4-carboxamide + L-glutamate + H(+). It functions in the pathway amino-acid biosynthesis; L-histidine biosynthesis; L-histidine from 5-phospho-alpha-D-ribose 1-diphosphate: step 5/9. IGPS catalyzes the conversion of PRFAR and glutamine to IGP, AICAR and glutamate. The HisF subunit catalyzes the cyclization activity that produces IGP and AICAR from PRFAR using the ammonia provided by the HisH subunit. The polypeptide is Imidazole glycerol phosphate synthase subunit HisF (Bacillus cereus (strain Q1)).